Consider the following 282-residue polypeptide: Cell division protein FtsQ (282 aa).

Topologically, residues 1-30 are cytoplasmic; sequence MINIGPPKKRRLRRKGNRFKKTRRVIPWRR. Residues 31-51 form a helical membrane-spanning segment; the sequence is LMIGALWGTMALASLGMVVAV. Residues 52–282 are Periplasmic-facing; that stretch reads ACFAGQMLFA…LDAGELRGKG (231 aa). A POTRA domain is found at 65–133; that stretch reads FKVERIQVEN…DQLVIRVDER (69 aa).

The protein belongs to the FtsQ/DivIB family. FtsQ subfamily.

The protein resides in the cell inner membrane. Essential cell division protein. The protein is Cell division protein FtsQ of Syntrophotalea carbinolica (strain DSM 2380 / NBRC 103641 / GraBd1) (Pelobacter carbinolicus).